The sequence spans 443 residues: METKALWEKLINKLKKEKLIDQDIIEEYIVTSELIKISNTEFVILVRSNLGVTILNEFKEVFVYEFKSVLNSYVSVDFLTKEIFEKNTKKENKKEPINTVLSENALTFENFIVGSSNKQANLAAKNVVANPGMSFNPLFIYGDSGLGKTHLLQAIKNQAELNGKKVLYLTSEEFTKRIVNALNKGDLSEIEELKTEINSNEFFILDDVQFLSKKDKTNEFFFNIINNFTENGKQLVFSSDKTPELLNGFDKRMITRFNSGLSTPINALDIPTAKLIIEAEIKKQGLKQKIKEDAVVYLAQNFSDDVRKIKGLVNRLLFFGIQNDLGHIIDLEDVIDLFKDTPSANLGLLNVKKIKEVVAKKYDVTIKAIDGKARTTAIKNARHLSMYFAKIILNHTSTQIGAEFGGRDHSTVLSAISRIEKLIYKEKEFKKIVESLKNEIIGK.

The tract at residues 1–76 (METKALWEKL…KSVLNSYVSV (76 aa)) is domain I, interacts with DnaA modulators. A domain II region spans residues 76-99 (VDFLTKEIFEKNTKKENKKEPINT). Residues 100 to 320 (VLSENALTFE…GLVNRLLFFG (221 aa)) are domain III, AAA+ region. Residues Gly-145, Gly-147, Lys-148, and Thr-149 each coordinate ATP. Positions 321-443 (IQNDLGHIID…ESLKNEIIGK (123 aa)) are domain IV, binds dsDNA.

Belongs to the DnaA family. In terms of assembly, oligomerizes as a right-handed, spiral filament on DNA at oriC.

It localises to the cytoplasm. Functionally, plays an essential role in the initiation and regulation of chromosomal replication. ATP-DnaA binds to the origin of replication (oriC) to initiate formation of the DNA replication initiation complex once per cell cycle. Binds the DnaA box (a 9 base pair repeat at the origin) and separates the double-stranded (ds)DNA. Forms a right-handed helical filament on oriC DNA; dsDNA binds to the exterior of the filament while single-stranded (ss)DNA is stabiized in the filament's interior. The ATP-DnaA-oriC complex binds and stabilizes one strand of the AT-rich DNA unwinding element (DUE), permitting loading of DNA polymerase. After initiation quickly degrades to an ADP-DnaA complex that is not apt for DNA replication. Binds acidic phospholipids. In Mesoplasma florum (strain ATCC 33453 / NBRC 100688 / NCTC 11704 / L1) (Acholeplasma florum), this protein is Chromosomal replication initiator protein DnaA.